Consider the following 125-residue polypeptide: Large ribosomal subunit protein bL12 (125 aa).

It belongs to the bacterial ribosomal protein bL12 family. As to quaternary structure, homodimer. Part of the ribosomal stalk of the 50S ribosomal subunit. Forms a multimeric L10(L12)X complex, where L10 forms an elongated spine to which 2 to 4 L12 dimers bind in a sequential fashion. Binds GTP-bound translation factors.

Functionally, forms part of the ribosomal stalk which helps the ribosome interact with GTP-bound translation factors. Is thus essential for accurate translation. In Campylobacter jejuni (strain RM1221), this protein is Large ribosomal subunit protein bL12.